Consider the following 215-residue polypeptide: 3-dehydroquinate dehydratase (215 aa).

3-dehydroquinate-binding positions include 27–29 (ELR) and Arg54. His112 functions as the Proton donor/acceptor in the catalytic mechanism. Catalysis depends on Lys139, which acts as the Schiff-base intermediate with substrate. Residues Arg176 and Gln198 each coordinate 3-dehydroquinate.

It belongs to the type-I 3-dehydroquinase family. In terms of assembly, homodimer.

The catalysed reaction is 3-dehydroquinate = 3-dehydroshikimate + H2O. It participates in metabolic intermediate biosynthesis; chorismate biosynthesis; chorismate from D-erythrose 4-phosphate and phosphoenolpyruvate: step 3/7. Involved in the third step of the chorismate pathway, which leads to the biosynthesis of aromatic amino acids. Catalyzes the cis-dehydration of 3-dehydroquinate (DHQ) and introduces the first double bond of the aromatic ring to yield 3-dehydroshikimate. The sequence is that of 3-dehydroquinate dehydratase from Pyrococcus abyssi (strain GE5 / Orsay).